The primary structure comprises 493 residues: GTPase Der (493 aa).

An EngA-type G 1 domain is found at 3–166; sequence PVIALVGRPN…EALGIFPKDN (164 aa). Residues 9–16, 56–60, and 118–121 contribute to the GTP site; these read GRPNVGKS, DTGGI, and NKVD. Acidic residues predominate over residues 167–184; sequence VEEEGEGEPASEEVAEGE. A disordered region spans residues 167-195; it reads VEEEGEGEPASEEVAEGEEPTRIPGPSEK. The 174-residue stretch at 198–371 folds into the EngA-type G 2 domain; the sequence is IKIAIIGRPN…SVQESFRSAV (174 aa). GTP contacts are provided by residues 204–211, 251–255, and 316–319; these read GRPNVGKS, DTAGV, and NKWD. Residues 372-456 enclose the KH-like domain; that stretch reads TRWPTSRLTS…PIRIEYKGGE (85 aa). A compositionally biased stretch (basic and acidic residues) spans 454-463; the sequence is GGENPYEGKK. A disordered region spans residues 454-493; that stretch reads GGENPYEGKKNSLTARQVNKKRRLMSHHKKAEKKKKDKRR. The span at 471-493 shows a compositional bias: basic residues; it reads VNKKRRLMSHHKKAEKKKKDKRR.

It belongs to the TRAFAC class TrmE-Era-EngA-EngB-Septin-like GTPase superfamily. EngA (Der) GTPase family. In terms of assembly, associates with the 50S ribosomal subunit.

In terms of biological role, GTPase that plays an essential role in the late steps of ribosome biogenesis. The protein is GTPase Der of Pseudomonas aeruginosa (strain LESB58).